Reading from the N-terminus, the 327-residue chain is BTB/POZ domain-containing protein KCTD12 (327 aa).

The tract at residues 1–28 is disordered; sequence MALADSARGLPNGGGGGGGSGSSSSSAE. The residue at position 2 (A2) is an N-acetylalanine. Residues 11 to 21 are compositionally biased toward gly residues; sequence PNGGGGGGGSG. At Y119 the chain carries Phosphotyrosine. The interval 129 to 204 is disordered; the sequence is LGAPQQPGPG…PLLTPSQSLD (76 aa). 3 positions are modified to phosphoserine: S153, S173, and S187. The residue at position 198 (T198) is a Phosphothreonine. Position 202 is a phosphoserine (S202).

In terms of assembly, interacts as a tetramer with GABBR1 and GABBR2. Expressed in the brain, mainly in the hippocampus and cerebellum.

It localises to the presynaptic cell membrane. The protein localises to the postsynaptic cell membrane. Functionally, auxiliary subunit of GABA-B receptors that determine the pharmacology and kinetics of the receptor response. Increases agonist potency and markedly alter the G-protein signaling of the receptors by accelerating onset and promoting desensitization. The polypeptide is BTB/POZ domain-containing protein KCTD12 (Kctd12) (Mus musculus (Mouse)).